Here is a 416-residue protein sequence, read N- to C-terminus: Nuclear hormone receptor family member nhr-59 (416 aa).

A DNA-binding region (nuclear receptor) is located at residues 17 to 94 (QTFCQVCGQE…IGMDIQNFQF (78 aa)). NR C4-type zinc fingers lie at residues 20-40 (CQVCGQESHGAHFGAITCRAC) and 57-82 (CKDGRGRCKILTNGRSCCKKCRLKKC). An NR LBD domain is found at 162–415 (TRLQKLSSSL…FSHPELVKDV (254 aa)).

This sequence belongs to the nuclear hormone receptor family.

The protein localises to the nucleus. Its function is as follows. Orphan nuclear receptor. The polypeptide is Nuclear hormone receptor family member nhr-59 (Caenorhabditis elegans).